Consider the following 267-residue polypeptide: 3-methyl-2-oxobutanoate hydroxymethyltransferase (267 aa).

Mg(2+)-binding residues include Asp-45 and Asp-84. Residues 45–46 (DS), Asp-84, and Lys-113 contribute to the 3-methyl-2-oxobutanoate site. A Mg(2+)-binding site is contributed by Glu-115. Glu-182 acts as the Proton acceptor in catalysis.

The protein belongs to the PanB family. In terms of assembly, homodecamer; pentamer of dimers. Mg(2+) is required as a cofactor.

It is found in the cytoplasm. It carries out the reaction 3-methyl-2-oxobutanoate + (6R)-5,10-methylene-5,6,7,8-tetrahydrofolate + H2O = 2-dehydropantoate + (6S)-5,6,7,8-tetrahydrofolate. It participates in cofactor biosynthesis; coenzyme A biosynthesis. Its function is as follows. Catalyzes the reversible reaction in which hydroxymethyl group from 5,10-methylenetetrahydrofolate is transferred onto alpha-ketoisovalerate to form ketopantoate. In Saccharolobus solfataricus (strain ATCC 35092 / DSM 1617 / JCM 11322 / P2) (Sulfolobus solfataricus), this protein is 3-methyl-2-oxobutanoate hydroxymethyltransferase.